The primary structure comprises 505 residues: Phosphoglycerate kinase, glycosomal (505 aa).

(2R)-3-phosphoglycerate is bound by residues V29, D30, F31, N32, R45, S67, H68, G70, R71, L219, R220, H256, and R257. Residues G302 and A303 each contribute to the ADP site. G302 is a CDP binding site. A303 and K304 together coordinate AMP. Position 303 (A303) interacts with ATP. A303 lines the Mg(2+) pocket. K304 serves as a coordination point for (2R)-3-phosphoglycerate. D307 is a binding site for CDP. Residue D307 coordinates Mg(2+). ADP is bound by residues K308 and G326. An AMP-binding site is contributed by K308. K308 contributes to the ATP binding site. G326 contacts CDP. 2 residues coordinate AMP: G327 and G399. Positions 327 and 399 each coordinate ATP. The ADP site is built by G399 and N423. CDP is bound by residues G424, L426, and F429. 4 residues coordinate ADP: F429, E430, D462, and T463. E430 lines the AMP pocket. Residues E430, D462, and T463 each contribute to the ATP site. D462 provides a ligand contact to Mg(2+).

Belongs to the phosphoglycerate kinase family. As to quaternary structure, monomer. The cofactor is Mg(2+).

The protein resides in the glycosome. It catalyses the reaction (2R)-3-phosphoglycerate + ATP = (2R)-3-phospho-glyceroyl phosphate + ADP. It participates in carbohydrate degradation; glycolysis; pyruvate from D-glyceraldehyde 3-phosphate: step 2/5. This is Phosphoglycerate kinase, glycosomal (PGKA) from Crithidia fasciculata.